Reading from the N-terminus, the 273-residue chain is 2-dehydro-3-deoxyphosphooctonate aldolase (273 aa).

It belongs to the KdsA family.

Its subcellular location is the cytoplasm. The enzyme catalyses D-arabinose 5-phosphate + phosphoenolpyruvate + H2O = 3-deoxy-alpha-D-manno-2-octulosonate-8-phosphate + phosphate. It functions in the pathway carbohydrate biosynthesis; 3-deoxy-D-manno-octulosonate biosynthesis; 3-deoxy-D-manno-octulosonate from D-ribulose 5-phosphate: step 2/3. The protein operates within bacterial outer membrane biogenesis; lipopolysaccharide biosynthesis. The protein is 2-dehydro-3-deoxyphosphooctonate aldolase of Citrifermentans bemidjiense (strain ATCC BAA-1014 / DSM 16622 / JCM 12645 / Bem) (Geobacter bemidjiensis).